The sequence spans 347 residues: Quinolinate synthase (347 aa).

2 residues coordinate iminosuccinate: His47 and Ser68. Position 113 (Cys113) interacts with [4Fe-4S] cluster. Residues 139-141 (YAN) and Ser156 contribute to the iminosuccinate site. Cys200 provides a ligand contact to [4Fe-4S] cluster. Residues 226 to 228 (HPE) and Thr243 each bind iminosuccinate. Residue Cys297 participates in [4Fe-4S] cluster binding.

Belongs to the quinolinate synthase family. Type 1 subfamily. [4Fe-4S] cluster is required as a cofactor.

Its subcellular location is the cytoplasm. It catalyses the reaction iminosuccinate + dihydroxyacetone phosphate = quinolinate + phosphate + 2 H2O + H(+). The protein operates within cofactor biosynthesis; NAD(+) biosynthesis; quinolinate from iminoaspartate: step 1/1. Functionally, catalyzes the condensation of iminoaspartate with dihydroxyacetone phosphate to form quinolinate. This is Quinolinate synthase from Salmonella enteritidis PT4 (strain P125109).